A 580-amino-acid chain; its full sequence is Laccase-20 (580 aa).

The first 23 residues, M1 to A23, serve as a signal peptide directing secretion. Plastocyanin-like domains are found at residues V31–G147 and K156–A310. N-linked (GlcNAc...) asparagine glycans are attached at residues N36 and N42. Cu cation is bound by residues H81 and H83. N-linked (GlcNAc...) asparagine glycosylation occurs at N115. The Cu cation site is built by H126 and H128. N-linked (GlcNAc...) asparagine glycans are attached at residues N200, N339, N392, N429, and N460. Positions D419 to P561 constitute a Plastocyanin-like 3 domain. Positions 478, 481, 483, 540, 541, 542, 546, and 551 each coordinate Cu cation. The tract at residues G560–S580 is disordered.

It belongs to the multicopper oxidase family. It depends on Cu cation as a cofactor.

It is found in the secreted. It localises to the extracellular space. The protein resides in the apoplast. It catalyses the reaction 4 hydroquinone + O2 = 4 benzosemiquinone + 2 H2O. Functionally, lignin degradation and detoxification of lignin-derived products. This Oryza sativa subsp. indica (Rice) protein is Laccase-20 (LAC20).